A 215-amino-acid polypeptide reads, in one-letter code: Large ribosomal subunit protein uL4 (215 aa).

Residues 46 to 76 (TAKSKNRAEVSGGGRKPWAQKGGGRARAGSI) are disordered. The segment covering 56-71 (SGGGRKPWAQKGGGRA) has biased composition (gly residues).

Belongs to the universal ribosomal protein uL4 family. In terms of assembly, part of the 50S ribosomal subunit.

In terms of biological role, one of the primary rRNA binding proteins, this protein initially binds near the 5'-end of the 23S rRNA. It is important during the early stages of 50S assembly. It makes multiple contacts with different domains of the 23S rRNA in the assembled 50S subunit and ribosome. Forms part of the polypeptide exit tunnel. This is Large ribosomal subunit protein uL4 from Helicobacter acinonychis (strain Sheeba).